Consider the following 496-residue polypeptide: Coiled-coil domain-containing protein 77 (496 aa).

The disordered stretch occupies residues 1–42 (MDFSPPHGLRGGRSPSLQDTTISSSHTQKNGGDSTPLPPINE). A compositionally biased stretch (polar residues) spans 15-33 (PSLQDTTISSSHTQKNGGD). The stretch at 51-113 (RELLEYYRKK…KALSDMQVYL (63 aa)) forms a coiled coil. Residues 170-208 (QRTVQSGDPFDRKVQRSGRAGVKQVPLKAPGKQDRTKAA) form a disordered region. Residues 214-495 (QILLLQVEAL…IYGLENELRI (282 aa)) are a coiled coil.

The protein is Coiled-coil domain-containing protein 77 (ccdc77) of Xenopus laevis (African clawed frog).